A 983-amino-acid polypeptide reads, in one-letter code: Envelope glycoprotein gp160 (983 aa).

Residues 1-20 are compositionally biased toward basic and acidic residues; the sequence is MASKESKPSRTTRRGMEPPL. Residues 1-22 are disordered; it reads MASKESKPSRTTRRGMEPPLRE. The signal sequence occupies residues 1–106; the sequence is MASKESKPSR…CLMWEVRKGN (106 aa). The Extracellular segment spans residues 107–832; sequence QCQAEEVIAL…WSSWFSWLKY (726 aa). N-linked (GlcNAc...) asparagine; by host glycosylation is found at Asn140, Asn161, Asn206, Asn258, Asn298, Asn364, Asn381, Asn387, Asn403, Asn414, Asn435, Asn439, Asn470, Asn475, Asn481, Asn491, Asn501, Asn515, Asn527, Asn537, Asn542, Asn543, and Asn568. The segment at 657–677 is fusion peptide; the sequence is GIGLVIVLAIMAIIAAAGAGL. Positions 689–739 form a coiled coil; that stretch reads RTAVQSLANATAAQQEVLEASYAMVQHIAKGIRILEARVARVEALVDRMMV. N-linked (GlcNAc...) asparagine; by host glycosylation is present at Asn697. The interval 723 to 739 is immunosuppression; that stretch reads LEARVARVEALVDRMMV. N-linked (GlcNAc...) asparagine; by host glycans are attached at residues Asn765, Asn772, Asn788, and Asn822. A coiled-coil region spans residues 780–815; sequence EEIEQHEGNLSLLLREAALQVHIAQRDARRIPDAWK. The helical transmembrane segment at 833–853 threads the bilayer; it reads IPWIIMGIVGLMCFRILMCVI. The Cytoplasmic segment spans residues 854–983; sequence SMCLQAYKQV…PTLENDYVEL (130 aa). A lipid anchor (S-palmitoyl cysteine; by host) is attached at Cys856.

As to quaternary structure, the mature envelope protein (Env) consists of a trimer of SU-TM heterodimers attached by noncovalent interactions or by a labile interchain disulfide bond. In terms of processing, specific enzymatic cleavages in vivo yield mature proteins. Envelope glycoproteins are synthesized as an inactive precursor that is N-glycosylated and processed likely by host cell furin or by a furin-like protease in the Golgi to yield the mature SU and TM proteins. The cleavage site between SU and TM requires the minimal sequence [KR]-X-[KR]-R. Post-translationally, the transmembrane protein is palmitoylated.

Its subcellular location is the virion membrane. The protein resides in the host cell membrane. The surface protein (SU) attaches the virus to the host cell by binding to its receptor. This interaction triggers the refolding of the transmembrane protein (TM) and is thought to activate its fusogenic potential by unmasking its fusion peptide. Fusion occurs at the host cell plasma membrane. Its function is as follows. The transmembrane protein (TM) acts as a class I viral fusion protein. Under the current model, the protein has at least 3 conformational states: pre-fusion native state, pre-hairpin intermediate state, and post-fusion hairpin state. During viral and target cell membrane fusion, the coiled coil regions (heptad repeats) assume a trimer-of-hairpins structure, positioning the fusion peptide in close proximity to the C-terminal region of the ectodomain. The formation of this structure appears to drive apposition and subsequent fusion of viral and target cell membranes. Membranes fusion leads to delivery of the nucleocapsid into the cytoplasm. The polypeptide is Envelope glycoprotein gp160 (env) (Maedi visna virus (strain KV1772) (MVV)).